We begin with the raw amino-acid sequence, 745 residues long: Cysteine protease atg4 (745 aa).

3 stretches are compositionally biased toward low complexity: residues 29-42, 52-64, and 194-215; these read QQSY…APQQ, SPTS…SSST, and NNNS…NNNN. Disordered stretches follow at residues 29 to 68 and 192 to 215; these read QQSY…AMGN and FQNN…NNNN. Cys262 acts as the Nucleophile in catalysis. 2 disordered regions span residues 344–363 and 439–480; these read LNRG…KEEE and QNNN…NGYN. A compositionally biased stretch (low complexity) spans 439-477; it reads QNNNKNNNNNNPTTTTTTTTTATSSNNNNNQSPPSRVPN. Active-site residues include Asp562 and His564. The interval 686 to 745 is disordered; it reads HIPYNPNNNQNNNQNNNNNNNKNNNNNTNQQQTPNYPPKLNTYQPDFSSDGEIDDFTMVG. Residues 688–719 are compositionally biased toward low complexity; the sequence is PYNPNNNQNNNQNNNNNNNKNNNNNTNQQQTP. Positions 734–745 are enriched in acidic residues; it reads SDGEIDDFTMVG.

This sequence belongs to the peptidase C54 family.

It is found in the cytoplasm. The enzyme catalyses [protein]-C-terminal L-amino acid-glycyl-phosphatidylethanolamide + H2O = [protein]-C-terminal L-amino acid-glycine + a 1,2-diacyl-sn-glycero-3-phosphoethanolamine. Functionally, cysteine protease that plays a key role in autophagy by mediating both proteolytic activation and delipidation of ATG8 family proteins. The protease activity is required for proteolytic activation of ATG8 family proteins: cleaves the C-terminal amino acid of ATG8 proteins to reveal a C-terminal glycine. Exposure of the glycine at the C-terminus is essential for ATG8 proteins conjugation to phosphatidylethanolamine (PE) and insertion to membranes, which is necessary for autophagy. In addition to the protease activity, also mediates delipidation of PE-conjugated ATG8 proteins. The protein is Cysteine protease atg4 (atg4-1) of Dictyostelium discoideum (Social amoeba).